Reading from the N-terminus, the 114-residue chain is T cell receptor beta variable 9 (114 aa).

The N-terminal stretch at 1–21 is a signal peptide; that stretch reads MGFRLLCCVAFCLLGAGPVDS. Positions 22–114 constitute an Ig-like domain; the sequence is GVTQTPKHLI…SALYFCASSV (93 aa). Residues cysteine 42 and cysteine 110 are joined by a disulfide bond. An N-linked (GlcNAc...) asparagine glycan is attached at asparagine 96.

As to quaternary structure, alpha-beta TR is a heterodimer composed of an alpha and beta chain; disulfide-linked. The alpha-beta TR is associated with the transmembrane signaling CD3 coreceptor proteins to form the TR-CD3 (TcR or TCR). The assembly of alpha-beta TR heterodimers with CD3 occurs in the endoplasmic reticulum where a single alpha-beta TR heterodimer associates with one CD3D-CD3E heterodimer, one CD3G-CD3E heterodimer and one CD247 homodimer forming a stable octameric structure. CD3D-CD3E and CD3G-CD3E heterodimers preferentially associate with TR alpha and TR beta chains, respectively. The association of the CD247 homodimer is the last step of TcR assembly in the endoplasmic reticulum and is required for transport to the cell surface.

It is found in the cell membrane. Its function is as follows. V region of the variable domain of T cell receptor (TR) beta chain that participates in the antigen recognition. Alpha-beta T cell receptors are antigen specific receptors which are essential to the immune response and are present on the cell surface of T lymphocytes. Recognize peptide-major histocompatibility (MH) (pMH) complexes that are displayed by antigen presenting cells (APC), a prerequisite for efficient T cell adaptive immunity against pathogens. Binding of alpha-beta TR to pMH complex initiates TR-CD3 clustering on the cell surface and intracellular activation of LCK that phosphorylates the ITAM motifs of CD3G, CD3D, CD3E and CD247 enabling the recruitment of ZAP70. In turn ZAP70 phosphorylates LAT, which recruits numerous signaling molecules to form the LAT signalosome. The LAT signalosome propagates signal branching to three major signaling pathways, the calcium, the mitogen-activated protein kinase (MAPK) kinase and the nuclear factor NF-kappa-B (NF-kB) pathways, leading to the mobilization of transcription factors that are critical for gene expression and essential for T cell growth and differentiation. The T cell repertoire is generated in the thymus, by V-(D)-J rearrangement. This repertoire is then shaped by intrathymic selection events to generate a peripheral T cell pool of self-MH restricted, non-autoaggressive T cells. Post-thymic interaction of alpha-beta TR with the pMH complexes shapes TR structural and functional avidity. The protein is T cell receptor beta variable 9 of Homo sapiens (Human).